We begin with the raw amino-acid sequence, 295 residues long: Glycine--tRNA ligase alpha subunit (295 aa).

The protein belongs to the class-II aminoacyl-tRNA synthetase family. Tetramer of two alpha and two beta subunits.

Its subcellular location is the cytoplasm. It catalyses the reaction tRNA(Gly) + glycine + ATP = glycyl-tRNA(Gly) + AMP + diphosphate. The chain is Glycine--tRNA ligase alpha subunit from Desulforamulus reducens (strain ATCC BAA-1160 / DSM 100696 / MI-1) (Desulfotomaculum reducens).